The chain runs to 320 residues: Cytochrome f (320 aa).

Residues 1-35 form the signal peptide; it reads MQTRNAFSWLKKQITRSISVSLMIYILTRTSISSA. Heme contacts are provided by Tyr-36, Cys-56, Cys-59, and His-60. A helical transmembrane segment spans residues 286 to 306; sequence VQGLLFFLASVILAQIFLVLK.

Belongs to the cytochrome f family. As to quaternary structure, the 4 large subunits of the cytochrome b6-f complex are cytochrome b6, subunit IV (17 kDa polypeptide, petD), cytochrome f and the Rieske protein, while the 4 small subunits are PetG, PetL, PetM and PetN. The complex functions as a dimer. Heme is required as a cofactor.

The protein resides in the plastid. Its subcellular location is the chloroplast thylakoid membrane. Its function is as follows. Component of the cytochrome b6-f complex, which mediates electron transfer between photosystem II (PSII) and photosystem I (PSI), cyclic electron flow around PSI, and state transitions. The sequence is that of Cytochrome f from Solanum bulbocastanum (Wild potato).